Reading from the N-terminus, the 251-residue chain is Coproheme decarboxylase (251 aa).

Fe-coproporphyrin III-binding positions include Arg-133, 147-151 (YPMSK), His-174, Gln-187, and Ser-225. Tyr-147 is an active-site residue.

Belongs to the ChdC family. Type 1 subfamily. Fe-coproporphyrin III is required as a cofactor.

It catalyses the reaction Fe-coproporphyrin III + 2 H2O2 + 2 H(+) = heme b + 2 CO2 + 4 H2O. The enzyme catalyses Fe-coproporphyrin III + H2O2 + H(+) = harderoheme III + CO2 + 2 H2O. It carries out the reaction harderoheme III + H2O2 + H(+) = heme b + CO2 + 2 H2O. The protein operates within porphyrin-containing compound metabolism; protoheme biosynthesis. In terms of biological role, involved in coproporphyrin-dependent heme b biosynthesis. Catalyzes the decarboxylation of Fe-coproporphyrin III (coproheme) to heme b (protoheme IX), the last step of the pathway. The reaction occurs in a stepwise manner with a three-propionate intermediate. This chain is Coproheme decarboxylase, found in Listeria innocua serovar 6a (strain ATCC BAA-680 / CLIP 11262).